Here is a 306-residue protein sequence, read N- to C-terminus: Tyrosine recombinase XerC (306 aa).

Positions 10 to 94 constitute a Core-binding (CB) domain; that stretch reads ARCHSYLQQF…AVKQWGEFLL (85 aa). Positions 115–294 constitute a Tyr recombinase domain; the sequence is PLPKNIDVDS…DFQHLAKVYD (180 aa). Catalysis depends on residues Arg-154, Lys-178, His-246, Arg-249, and His-272. Tyr-281 serves as the catalytic O-(3'-phospho-DNA)-tyrosine intermediate.

The protein belongs to the 'phage' integrase family. XerC subfamily. As to quaternary structure, forms a cyclic heterotetrameric complex composed of two molecules of XerC and two molecules of XerD.

It localises to the cytoplasm. Site-specific tyrosine recombinase, which acts by catalyzing the cutting and rejoining of the recombining DNA molecules. The XerC-XerD complex is essential to convert dimers of the bacterial chromosome into monomers to permit their segregation at cell division. It also contributes to the segregational stability of plasmids. This Shewanella oneidensis (strain ATCC 700550 / JCM 31522 / CIP 106686 / LMG 19005 / NCIMB 14063 / MR-1) protein is Tyrosine recombinase XerC.